We begin with the raw amino-acid sequence, 1236 residues long: ESX-4 secretion system protein EccC4 (1236 aa).

The next 2 membrane-spanning stretches (helical) occupy residues 32 to 52 and 59 to 79; these read LLPV…FLPG and PTFL…AVTG. FtsK domains lie at 407 to 607, 747 to 936, and 1018 to 1201; these read GTAV…SESR, RVPL…ADSE, and GQPV…DEGA. Residues 430–437, 765–772, and 1035–1042 contribute to the ATP site; these read GATGSGKS, GAPQTGKS, and GDNECGKT.

As to quaternary structure, part of the ESX-4 / type VII secretion system (T7SS), which is composed of cytosolic and membrane components.

Its subcellular location is the cell membrane. The polypeptide is ESX-4 secretion system protein EccC4 (eccC4) (Mycobacterium tuberculosis (strain ATCC 25618 / H37Rv)).